We begin with the raw amino-acid sequence, 80 residues long: Moroidotoxin A (80 aa).

The signal sequence occupies residues 1–27 (MAAVKKHLRFALVAAITIALLVAGSVA). A propeptide spanning residues 28 to 44 (DESSEDIDNIVIKTPLD) is cleaved from the precursor. Cystine bridges form between C48-C65, C53-C67, and C61-C76.

This sequence belongs to the gympietide family. Expressed in trichomes, that are stiff epidermal hairs located on the surface of petioles and leaves. Not expressed in other aerial parts.

The protein resides in the secreted. In terms of biological role, neurotoxin certainly responsible for the defensive, persistent, and painful stings of the giant stinging tree. Inhibits inactivation of Nav1.7/SCN9A sodium channel in sensory neurons by directly interacting with TMEM233, a newly described Nav-interacting protein. Has virtually no effect on Nav1.7/SCN9A function in heterologous expression systems and in neurons that do not express TMEM233. Also weakly but significantly affects Nav1.8/SCN10A. Coexpression of TMEM233 with Nav also confers ExTxA sensitivity to Nav1.1-Nav1.6. On the Nav1.7/SCN9A channel, causes a significant hyperpolarizing shift in the voltage dependence of activation. Its effects on Nav currents are irreversible, with no apparent reduction in activity even after repeated wash steps over 30 minutes. In vivo, induces nocifensive behavior in mice (licking or biting and shaking or lifting of the affected paw) lasting for approximately 1 hour. The chain is Moroidotoxin A from Dendrocnide moroides (Gympie stinging tree).